The following is a 156-amino-acid chain: Putative pre-16S rRNA nuclease (156 aa).

It belongs to the YqgF nuclease family.

The protein resides in the cytoplasm. Could be a nuclease involved in processing of the 5'-end of pre-16S rRNA. In Ehrlichia chaffeensis (strain ATCC CRL-10679 / Arkansas), this protein is Putative pre-16S rRNA nuclease.